The primary structure comprises 647 residues: Protein FAM161B (647 aa).

Disordered stretches follow at residues 1-39, 89-110, and 135-167; these read MTVG…GDGL, SDPE…FFQD, and LNNL…SWAS. A compositionally biased stretch (acidic residues) spans 91–105; that stretch reads PESDENLSEDEEDLE. Residues 262 to 292 adopt a coiled-coil conformation; the sequence is LEKEEQLKEAARQRDLAATAEAKISKQKATR. Over residues 332-350 the composition is skewed to polar residues; that stretch reads PIASSSNRANPQPRTATRT. Disordered stretches follow at residues 332-352 and 388-439; these read PIAS…RTQQ and KRRE…RSRS. A coiled-coil region spans residues 510–546; that stretch reads LEEVFKAKLKENRNNDRKRAKEYKKELEEMKQRIQTR. The interval 583-647 is disordered; the sequence is KGQGTRAVQE…QSPENLVSLA (65 aa). Positions 590–602 are enriched in basic and acidic residues; the sequence is VQEKETKIKDFPR. Polar residues predominate over residues 637-647; sequence HQSPENLVSLA.

This sequence belongs to the FAM161 family. In terms of assembly, interacts with FAM161A. In terms of tissue distribution, ubiquitously expressed.

The polypeptide is Protein FAM161B (FAM161B) (Homo sapiens (Human)).